The sequence spans 87 residues: Small ribosomal subunit protein bS16 (87 aa).

This sequence belongs to the bacterial ribosomal protein bS16 family.

The protein is Small ribosomal subunit protein bS16 of Buchnera aphidicola subsp. Baizongia pistaciae (strain Bp).